Consider the following 305-residue polypeptide: Ferredoxin--NADP reductase (305 aa).

FAD contacts are provided by Glu-31, Tyr-42, Val-82, and Asp-274.

The protein belongs to the ferredoxin--NADP reductase type 2 family. In terms of assembly, homodimer. Requires FAD as cofactor.

It carries out the reaction 2 reduced [2Fe-2S]-[ferredoxin] + NADP(+) + H(+) = 2 oxidized [2Fe-2S]-[ferredoxin] + NADPH. The chain is Ferredoxin--NADP reductase from Ignicoccus hospitalis (strain KIN4/I / DSM 18386 / JCM 14125).